The primary structure comprises 669 residues: Carnitine O-palmitoyltransferase 2, mitochondrial (669 aa).

The N-terminal 36 residues, 1–36 (MMAGLLSTQCNSTLSKLKHLSNNPALSVLTSTHRKY), are a transit peptide targeting the mitochondrion. The Mitochondrial matrix portion of the chain corresponds to 37–190 (SSKDGAGSEY…GLLEPEVFHL (154 aa)). Positions 191–220 (NPAKSDTDSFKKLIRWVPPSISWFGAYMVN) form an intramembrane region, note=Mitochondrial inner membrane. At 221 to 669 (AYPLDMSQYF…FTVLDGNPIH (449 aa)) the chain is on the mitochondrial matrix side. The active-site Proton acceptor is histidine 384. 464–476 (GKEQLKKKKLSPD) is a CoA binding site. Residues tyrosine 498, serine 500, and threonine 511 each coordinate (R)-carnitine.

This sequence belongs to the carnitine/choline acetyltransferase family.

Its subcellular location is the mitochondrion inner membrane. The enzyme catalyses (R)-carnitine + hexadecanoyl-CoA = O-hexadecanoyl-(R)-carnitine + CoA. It carries out the reaction octanoyl-CoA + (R)-carnitine = O-octanoyl-(R)-carnitine + CoA. It catalyses the reaction decanoyl-CoA + (R)-carnitine = O-decanoyl-(R)-carnitine + CoA. The catalysed reaction is dodecanoyl-CoA + (R)-carnitine = O-dodecanoyl-R-carnitine + CoA. The enzyme catalyses tetradecanoyl-CoA + (R)-carnitine = O-tetradecanoyl-(R)-carnitine + CoA. It carries out the reaction (R)-carnitine + octadecanoyl-CoA = O-octadecanoyl-(R)-carnitine + CoA. It catalyses the reaction eicosanoyl-CoA + (R)-carnitine = O-eicosanoyl-(R)-carnitine + CoA. The catalysed reaction is (9Z)-tetradecenoyl-CoA + (R)-carnitine = O-(9Z)-tetradecenoyl-(R)-carnitine + CoA. The enzyme catalyses (5Z)-tetradecenoyl-CoA + (R)-carnitine = O-(5Z)-tetradecenoyl-(R)-carnitine + CoA. It carries out the reaction (R)-carnitine + (9Z)-octadecenoyl-CoA = O-(9Z)-octadecenoyl-(R)-carnitine + CoA. It catalyses the reaction 4,8-dimethylnonanoyl-CoA + (R)-carnitine = O-4,8-dimethylnonanoyl-(R)-carnitine + CoA. It participates in lipid metabolism; fatty acid beta-oxidation. Functionally, involved in the intramitochondrial synthesis of acylcarnitines from accumulated acyl-CoA metabolites. Reconverts acylcarnitines back into the respective acyl-CoA esters that can then undergo beta-oxidation, an essential step for the mitochondrial uptake of long-chain fatty acids and their subsequent beta-oxidation in the mitochondrion. Active with medium (C8-C12) and long-chain (C14-C18) acyl-CoA esters. The sequence is that of Carnitine O-palmitoyltransferase 2, mitochondrial (cpt2) from Danio rerio (Zebrafish).